A 381-amino-acid polypeptide reads, in one-letter code: Succinyl-diaminopimelate desuccinylase (381 aa).

Zn(2+) is bound at residue His68. Asp70 is a catalytic residue. Asp101 is a binding site for Zn(2+). The active-site Proton acceptor is the Glu135. Zn(2+) is bound by residues Glu136, Glu164, and His350.

Belongs to the peptidase M20A family. DapE subfamily. In terms of assembly, homodimer. Zn(2+) serves as cofactor. It depends on Co(2+) as a cofactor.

It catalyses the reaction N-succinyl-(2S,6S)-2,6-diaminopimelate + H2O = (2S,6S)-2,6-diaminopimelate + succinate. It functions in the pathway amino-acid biosynthesis; L-lysine biosynthesis via DAP pathway; LL-2,6-diaminopimelate from (S)-tetrahydrodipicolinate (succinylase route): step 3/3. Catalyzes the hydrolysis of N-succinyl-L,L-diaminopimelic acid (SDAP), forming succinate and LL-2,6-diaminopimelate (DAP), an intermediate involved in the bacterial biosynthesis of lysine and meso-diaminopimelic acid, an essential component of bacterial cell walls. The polypeptide is Succinyl-diaminopimelate desuccinylase (dapE) (Neisseria meningitidis serogroup B (strain ATCC BAA-335 / MC58)).